Here is a 196-residue protein sequence, read N- to C-terminus: Holliday junction branch migration complex subunit RuvA (196 aa).

The interval M1–L63 is domain I. The interval N64–N135 is domain II. Residues N135 to S138 are flexible linker. Residues S139 to G196 form a domain III region.

It belongs to the RuvA family. In terms of assembly, homotetramer. Forms an RuvA(8)-RuvB(12)-Holliday junction (HJ) complex. HJ DNA is sandwiched between 2 RuvA tetramers; dsDNA enters through RuvA and exits via RuvB. An RuvB hexamer assembles on each DNA strand where it exits the tetramer. Each RuvB hexamer is contacted by two RuvA subunits (via domain III) on 2 adjacent RuvB subunits; this complex drives branch migration. In the full resolvosome a probable DNA-RuvA(4)-RuvB(12)-RuvC(2) complex forms which resolves the HJ.

The protein resides in the cytoplasm. The RuvA-RuvB-RuvC complex processes Holliday junction (HJ) DNA during genetic recombination and DNA repair, while the RuvA-RuvB complex plays an important role in the rescue of blocked DNA replication forks via replication fork reversal (RFR). RuvA specifically binds to HJ cruciform DNA, conferring on it an open structure. The RuvB hexamer acts as an ATP-dependent pump, pulling dsDNA into and through the RuvAB complex. HJ branch migration allows RuvC to scan DNA until it finds its consensus sequence, where it cleaves and resolves the cruciform DNA. This chain is Holliday junction branch migration complex subunit RuvA, found in Borrelia turicatae (strain 91E135).